The sequence spans 504 residues: UDP-glycosyltransferase UGT4 (504 aa).

The N-terminal stretch at 1-23 (MTLLRDLLLLYINSLLFINPSIG) is a signal peptide. Residues 24–474 (ENILVFLPTK…SAVIDLYWFQ (451 aa)) are Lumenal-facing. N-linked (GlcNAc...) asparagine glycosylation is found at Asn54, Asn66, Asn69, and Asn422. Residues 475 to 495 (YILLDIILFYSLIVLILLCIL) traverse the membrane as a helical segment. Residues 496–504 (RIFFRMLTK) lie on the Cytoplasmic side of the membrane.

Belongs to the UDP-glycosyltransferase family.

The protein resides in the microsome membrane. Functionally, catalyzes the transfer of a glycosyl group from a UDP-sugar to an acceptor molecule. The polypeptide is UDP-glycosyltransferase UGT4 (Dactylopius coccus (Cochineal)).